Reading from the N-terminus, the 335-residue chain is Glutaredoxin-3 (335 aa).

Position 2 is an N-acetylalanine (A2). The Thioredoxin domain occupies 2–117 (AAGAAEAAVA…LTKKVQRHAS (116 aa)). 2 positions are modified to phosphoserine: S117 and S120. Glutaredoxin domains follow at residues 144–236 (APCM…PKLE) and 237–335 (ERLK…RGEN). C159 and C261 together coordinate [2Fe-2S] cluster.

Homodimer; the homodimer is independent of 2Fe-2S clusters. Heterotrimer; forms a heterotrimeric complex composed by two BOLA2 molecules and one GLRX3 molecule; linked by [2Fe-2S] clusters. Interacts (via N-terminus) with PRKCQ/PKC-theta. Interacts (via C-terminus) with CSRP3. Interacts with CSRP2. In terms of tissue distribution, expressed in heart, spleen, testis and, to a lower extent, in thymus and peripheral blood leukocytes. Weakly expressed in lung, placenta, colon and small intestine.

It localises to the cytoplasm. The protein resides in the cytosol. Its subcellular location is the cell cortex. The protein localises to the myofibril. It is found in the sarcomere. It localises to the z line. Functionally, together with BOLA2, acts as a cytosolic iron-sulfur (Fe-S) cluster assembly factor that facilitates [2Fe-2S] cluster insertion into a subset of cytosolic proteins. Acts as a critical negative regulator of cardiac hypertrophy and a positive inotropic regulator. Required for hemoglobin maturation. Does not possess any thyoredoxin activity since it lacks the conserved motif that is essential for catalytic activity. The protein is Glutaredoxin-3 (GLRX3) of Homo sapiens (Human).